A 590-amino-acid polypeptide reads, in one-letter code: Protein NRT1/ PTR FAMILY 8.5 (590 aa).

Residues 96–116 traverse the membrane as a helical segment; sequence ASDVMIWQGTCYITPLIGAVI. T126 is modified (phosphothreonine). The next 10 membrane-spanning stretches (helical) occupy residues 130-150, 168-188, 214-234, 242-262, 365-385, 401-421, 445-465, 478-498, 524-544, and 562-582; these read FSAIYFIGMALLTLSASLPVL, TVQYAVFFTGLYLIALGTGGI, FFNWFYFSINIGSFISSTLLV, WGLGFLIPTVFMGVSIASFFI, FPIWASGIVYSVLYSQISTLF, IPPASFGVFDTLIVLISIPIY, MGIGLFLSVLSIAAAAIVETV, IFWQIPQYILMGIAEVFFFIG, AVGSYLSSLILTLVAYFTALG, and FFWLLVSLGLVNIPVYALICV.

It belongs to the major facilitator superfamily. Proton-dependent oligopeptide transporter (POT/PTR) (TC 2.A.17) family. In terms of tissue distribution, expressed in shoots, roots, stems, leaves, flowers and siliques.

The protein localises to the membrane. This chain is Protein NRT1/ PTR FAMILY 8.5 (NPF8.5), found in Arabidopsis thaliana (Mouse-ear cress).